We begin with the raw amino-acid sequence, 64 residues long: MSQKQLPPVKVRDPTTGKEVELTPIKVWKLSPRGRRGVKIGLFKSPETGKYFRAKVPDDYPETG.

This sequence belongs to the Cren7 family. Monomer. In terms of processing, methylated at multiple sites, to varying extents.

It localises to the chromosome. Its subcellular location is the cytoplasm. A chromatin protein, binds double-stranded DNA without sequence specificity. Constrains negative DNA supercoils. This Aeropyrum pernix (strain ATCC 700893 / DSM 11879 / JCM 9820 / NBRC 100138 / K1) protein is Chromatin protein Cren7.